A 410-amino-acid chain; its full sequence is Divergent protein kinase domain 1A (410 aa).

Topologically, residues 1-5 are cytoplasmic; the sequence is MARLS. A helical transmembrane segment spans residues 6 to 26; that stretch reads YVRIKYLFFSWLAVFIGSWVI. Over 27 to 410 the chain is Lumenal; that stretch reads YVRYNSYTEL…WKKISHTNDS (384 aa).

Belongs to the DIPK family. In terms of processing, among the many cysteines in the lumenal domain, most are probably involved in disulfide bonds.

Its subcellular location is the endoplasmic reticulum membrane. The sequence is that of Divergent protein kinase domain 1A (dipk1a) from Xenopus laevis (African clawed frog).